Reading from the N-terminus, the 218-residue chain is Protein-methionine-sulfoxide reductase heme-binding subunit MsrQ (218 aa).

Helical transmembrane passes span threonine 12–phenylalanine 32, methionine 82–aspartate 102, proline 118–threonine 138, tryptophan 150–tryptophan 170, and glutamine 180–tryptophan 200.

Belongs to the MsrQ family. Heterodimer of a catalytic subunit (MsrP) and a heme-binding subunit (MsrQ). The cofactor is FMN. Heme b serves as cofactor.

The protein localises to the cell inner membrane. Its function is as follows. Part of the MsrPQ system that repairs oxidized periplasmic proteins containing methionine sulfoxide residues (Met-O), using respiratory chain electrons. Thus protects these proteins from oxidative-stress damage caused by reactive species of oxygen and chlorine generated by the host defense mechanisms. MsrPQ is essential for the maintenance of envelope integrity under bleach stress, rescuing a wide series of structurally unrelated periplasmic proteins from methionine oxidation. MsrQ provides electrons for reduction to the reductase catalytic subunit MsrP, using the quinone pool of the respiratory chain. The polypeptide is Protein-methionine-sulfoxide reductase heme-binding subunit MsrQ (Herminiimonas arsenicoxydans).